Reading from the N-terminus, the 78-residue chain is Small ribosomal subunit protein bS16c (78 aa).

It belongs to the bacterial ribosomal protein bS16 family.

It is found in the plastid. Its subcellular location is the chloroplast. This Phaeodactylum tricornutum (strain CCAP 1055/1) protein is Small ribosomal subunit protein bS16c.